The chain runs to 279 residues: Large ribosomal subunit protein uL2 (279 aa).

A disordered region spans residues 202–279 (NASIGKAGRS…TSRHKSKKKG (78 aa)). A compositionally biased stretch (basic residues) spans 209-220 (GRSRWLGRRPHN).

It belongs to the universal ribosomal protein uL2 family. As to quaternary structure, part of the 50S ribosomal subunit. Forms a bridge to the 30S subunit in the 70S ribosome.

Functionally, one of the primary rRNA binding proteins. Required for association of the 30S and 50S subunits to form the 70S ribosome, for tRNA binding and peptide bond formation. It has been suggested to have peptidyltransferase activity; this is somewhat controversial. Makes several contacts with the 16S rRNA in the 70S ribosome. The sequence is that of Large ribosomal subunit protein uL2 from Methylocella silvestris (strain DSM 15510 / CIP 108128 / LMG 27833 / NCIMB 13906 / BL2).